Consider the following 253-residue polypeptide: Methionine aminopeptidase A (253 aa).

Substrate is bound at residue His80. Asp98, Asp109, and His172 together coordinate a divalent metal cation. His179 serves as a coordination point for substrate. Positions 205 and 236 each coordinate a divalent metal cation.

It belongs to the peptidase M24A family. Methionine aminopeptidase type 1 subfamily. In terms of assembly, monomer. Co(2+) serves as cofactor. It depends on Zn(2+) as a cofactor. The cofactor is Mn(2+). Fe(2+) is required as a cofactor.

It catalyses the reaction Release of N-terminal amino acids, preferentially methionine, from peptides and arylamides.. Functionally, removes the N-terminal methionine from nascent proteins. The N-terminal methionine is often cleaved when the second residue in the primary sequence is small and uncharged (Met-Ala-, Cys, Gly, Pro, Ser, Thr, or Val). Requires deformylation of the N(alpha)-formylated initiator methionine before it can be hydrolyzed. The protein is Methionine aminopeptidase A of Synechocystis sp. (strain ATCC 27184 / PCC 6803 / Kazusa).